Consider the following 482-residue polypeptide: tRNA sulfurtransferase (482 aa).

The 105-residue stretch at 61–165 folds into the THUMP domain; that stretch reads KETLEVLTQT…NDKLNQVIER (105 aa). ATP is bound by residues 183–184, K265, G287, and Q296; that span reads LI. C344 and C456 are joined by a disulfide. A Rhodanese domain is found at 404–482; the sequence is VAEHAVVLDI…GFHNVKVYRP (79 aa). The Cysteine persulfide intermediate role is filled by C456.

The protein belongs to the ThiI family.

It is found in the cytoplasm. It carries out the reaction [ThiI sulfur-carrier protein]-S-sulfanyl-L-cysteine + a uridine in tRNA + 2 reduced [2Fe-2S]-[ferredoxin] + ATP + H(+) = [ThiI sulfur-carrier protein]-L-cysteine + a 4-thiouridine in tRNA + 2 oxidized [2Fe-2S]-[ferredoxin] + AMP + diphosphate. The enzyme catalyses [ThiS sulfur-carrier protein]-C-terminal Gly-Gly-AMP + S-sulfanyl-L-cysteinyl-[cysteine desulfurase] + AH2 = [ThiS sulfur-carrier protein]-C-terminal-Gly-aminoethanethioate + L-cysteinyl-[cysteine desulfurase] + A + AMP + 2 H(+). Its pathway is cofactor biosynthesis; thiamine diphosphate biosynthesis. Its function is as follows. Catalyzes the ATP-dependent transfer of a sulfur to tRNA to produce 4-thiouridine in position 8 of tRNAs, which functions as a near-UV photosensor. Also catalyzes the transfer of sulfur to the sulfur carrier protein ThiS, forming ThiS-thiocarboxylate. This is a step in the synthesis of thiazole, in the thiamine biosynthesis pathway. The sulfur is donated as persulfide by IscS. The polypeptide is tRNA sulfurtransferase (Vibrio atlanticus (strain LGP32) (Vibrio splendidus (strain Mel32))).